The sequence spans 950 residues: Translation initiation factor IF-2 (950 aa).

4 stretches are compositionally biased toward basic and acidic residues: residues 128–156 (KPKV…KVEA), 165–186 (AEVK…EKKK), 200–234 (KRAE…DNRR), and 291–312 (NRRD…DGNR). The segment at 128 to 352 (KPKVAEPVKK…YQNNQSSNVP (225 aa)) is disordered. Composition is skewed to polar residues over residues 322–336 (NRNQ…NWNQ) and 343–352 (YQNNQSSNVP). Residues 448 to 619 (ERPAVVTIMG…LLVAEVQELK (172 aa)) enclose the tr-type G domain. The interval 457 to 464 (GHVDHGKT) is G1. 457-464 (GHVDHGKT) serves as a coordination point for GTP. A G2 region spans residues 482-486 (GITQH). The segment at 503-506 (DTPG) is G3. GTP-binding positions include 503–507 (DTPGH) and 557–560 (NKLD). Residues 557–560 (NKLD) are G4. Residues 595 to 597 (SAK) form a G5 region.

It belongs to the TRAFAC class translation factor GTPase superfamily. Classic translation factor GTPase family. IF-2 subfamily.

The protein localises to the cytoplasm. One of the essential components for the initiation of protein synthesis. Protects formylmethionyl-tRNA from spontaneous hydrolysis and promotes its binding to the 30S ribosomal subunits. Also involved in the hydrolysis of GTP during the formation of the 70S ribosomal complex. This Lactococcus lactis subsp. cremoris (Streptococcus cremoris) protein is Translation initiation factor IF-2 (infB).